A 295-amino-acid polypeptide reads, in one-letter code: UDP-N-acetylenolpyruvoylglucosamine reductase (295 aa).

The 165-residue stretch at 25-189 (RVGGPADLFA…LEALFRLDQR (165 aa)) folds into the FAD-binding PCMH-type domain. Arginine 169 is an active-site residue. Serine 218 (proton donor) is an active-site residue. Glutamate 288 is a catalytic residue.

Belongs to the MurB family. FAD serves as cofactor.

It is found in the cytoplasm. The catalysed reaction is UDP-N-acetyl-alpha-D-muramate + NADP(+) = UDP-N-acetyl-3-O-(1-carboxyvinyl)-alpha-D-glucosamine + NADPH + H(+). Its pathway is cell wall biogenesis; peptidoglycan biosynthesis. Functionally, cell wall formation. This Pelobacter propionicus (strain DSM 2379 / NBRC 103807 / OttBd1) protein is UDP-N-acetylenolpyruvoylglucosamine reductase.